A 351-amino-acid chain; its full sequence is MVDDSAVVRQVLVNVLNDAADIEVIATAADPLLAIEKMRKQWPDVIVLDVEMPRMDGITFLRKIMSERPTPVVICSTLTEKGARVTMDALAAGAVAVVTKPRLGLKQFLTESADELVATVRSAARANVKRLAARVTAAPLEAEVKHTADVILPAQSGRAMAQTTERIVAIGTSTGGTQALEEVLTALPRVCPGIVIVQHMPEKFTAAFAARLNGLCQIAVKEAANNDRVMPGRALIAPGGKHLLLRRSGAQYFVEVLEGPPVNRHRPSVDVLFRSAARAAGSNALGIIMTGMGDDGAAGLLEMRQAGARTVAQDEQTSIVFGMPKEAIKRGGADRILALGAMAREIVTQLQ.

A Response regulatory domain is found at 1 to 115; it reads MVDDSAVVRQ…KQFLTESADE (115 aa). D49 is modified (4-aspartylphosphate). A CheB-type methylesterase domain is found at 161-351; that stretch reads AQTTERIVAI…MAREIVTQLQ (191 aa). Catalysis depends on residues S173, H199, and D295.

The protein belongs to the CheB family. In terms of processing, phosphorylated by CheA. Phosphorylation of the N-terminal regulatory domain activates the methylesterase activity.

Its subcellular location is the cytoplasm. It catalyses the reaction [protein]-L-glutamate 5-O-methyl ester + H2O = L-glutamyl-[protein] + methanol + H(+). The catalysed reaction is L-glutaminyl-[protein] + H2O = L-glutamyl-[protein] + NH4(+). Functionally, involved in chemotaxis. Part of a chemotaxis signal transduction system that modulates chemotaxis in response to various stimuli. Catalyzes the demethylation of specific methylglutamate residues introduced into the chemoreceptors (methyl-accepting chemotaxis proteins or MCP) by CheR. Also mediates the irreversible deamidation of specific glutamine residues to glutamic acid. The polypeptide is Protein-glutamate methylesterase/protein-glutamine glutaminase 1 (Xanthomonas oryzae pv. oryzae (strain MAFF 311018)).